Reading from the N-terminus, the 230-residue chain is MRLAGPLRIVALVVSVGLTWIVVSILLGGPGSGFPRIQQLFTSPESSVTAAPRARKYKCGLPQPCPEEHLAFRVVSGAANVIGPKICLEDKMLMSSVKDNVGRGLNIALVNGVSGELIEARAFDMWAGDVNDLLKFIRPLHEGTLVFVASYDDPATKMNEETRKLFSELGSRNAKELAFRDSWVFVGAKGVQNKSPFEQHVKNSKHTNKYEGWPEALEMEGCIPRRSTAS.

The N-terminal stretch at 1-33 (MRLAGPLRIVALVVSVGLTWIVVSILLGGPGSG) is a signal peptide. 2 disulfide bridges follow: cysteine 59/cysteine 87 and cysteine 65/cysteine 222. Residues 68–226 (EHLAFRVVSG…LEMEGCIPRR (159 aa)) form the GG-type lectin domain.

Belongs to the FAM3 family.

The protein resides in the secreted. The polypeptide is Protein FAM3A (FAM3A) (Pongo abelii (Sumatran orangutan)).